Here is a 2273-residue protein sequence, read N- to C-terminus: Nonribosomal peptide synthetase hasD (2273 aa).

Residues 100-446 (FHDQLQKHSS…AGLGLALGYF (347 aa)) form an adenylation 1 region. The 77-residue stretch at 588–664 (ERGLGAVESV…NIAAAVVELS (77 aa)) folds into the Carrier 1 domain. At S625 the chain carries O-(pantetheine 4'-phosphoryl)serine. Positions 696–1120 (IAPMTDMQTR…AAQPDTDLSN (425 aa)) are condensation 1. Positions 1156–1487 (ENSIQAHPDI…SGVQVTPGYL (332 aa)) are adenylation 2. The Carrier 2 domain occupies 1634 to 1714 (DLETDTQRVL…DLSLAIDELV (81 aa)). S1673 is modified (O-(pantetheine 4'-phosphoryl)serine). Residues 1735–2127 (GQLPLSYLEK…QDLEVDMEYD (393 aa)) are condensation 2. A disordered region spans residues 2174 to 2200 (PVGLTPSHEGSAELTNGTNKTDSTTGQ). Residues 2186-2200 (ELTNGTNKTDSTTGQ) show a composition bias toward polar residues. Residues 2201-2273 (QELENNLTDV…LELATCAVII (73 aa)) enclose the Carrier 3 domain. S2235 is modified (O-(pantetheine 4'-phosphoryl)serine).

It belongs to the NRP synthetase family. It depends on pantetheine 4'-phosphate as a cofactor.

Its pathway is secondary metabolite biosynthesis. Its function is as follows. Nonribosomal peptide synthetase; part of the gene cluster that mediates the biosynthesis of hexadehydro-astechrome (HAS), a tryptophan-derived iron(III)-complex that acts as a virulence factor in infected mice. Within the pathway, the NRPS condenses tryptophan and alanine to produce the Trp-Ala dipeptide. The 7-dimethylallyltryptophan synthase hasE then catalyzes the prenylation of the hasD-tethered tryptophan or the resulting tethered Trp-Ala dipeptide at the C-7 position of the indole moiety. HAS biosynthesis continues via tethered intermediates with the succesive actions of the cytochrome P450 monooxygenase hasH, the O-methyltransferase hasC, and the FAD-linked oxidoreductase hasG. The resulting O-methylated diketopiperazine is then released from hasD. Finally, three O-methylated diketopiperazine molecules assemble in a trimeric complex with Fe(III) to produce hexadehydro-astechrome. In Aspergillus fumigatus (strain CBS 144.89 / FGSC A1163 / CEA10) (Neosartorya fumigata), this protein is Nonribosomal peptide synthetase hasD.